Here is a 155-residue protein sequence, read N- to C-terminus: UPF0260 protein R01011 (155 aa).

Belongs to the UPF0260 family.

This Rhizobium meliloti (strain 1021) (Ensifer meliloti) protein is UPF0260 protein R01011.